The sequence spans 334 residues: Protein-glutamate methylesterase/protein-glutamine glutaminase 1 (334 aa).

The 119-residue stretch at Asn-2–Leu-120 folds into the Response regulatory domain. At Asp-53 the chain carries 4-aspartylphosphate. In terms of domain architecture, CheB-type methylesterase spans Arg-145–Ile-334. Active-site residues include Ser-157, His-184, and Asp-277.

The protein belongs to the CheB family. In terms of processing, phosphorylated by CheA. Phosphorylation of the N-terminal regulatory domain activates the methylesterase activity.

The protein localises to the cytoplasm. The catalysed reaction is [protein]-L-glutamate 5-O-methyl ester + H2O = L-glutamyl-[protein] + methanol + H(+). It catalyses the reaction L-glutaminyl-[protein] + H2O = L-glutamyl-[protein] + NH4(+). Functionally, involved in chemotaxis. Part of a chemotaxis signal transduction system that modulates chemotaxis in response to various stimuli. Catalyzes the demethylation of specific methylglutamate residues introduced into the chemoreceptors (methyl-accepting chemotaxis proteins or MCP) by CheR. Also mediates the irreversible deamidation of specific glutamine residues to glutamic acid. The protein is Protein-glutamate methylesterase/protein-glutamine glutaminase 1 of Burkholderia lata (strain ATCC 17760 / DSM 23089 / LMG 22485 / NCIMB 9086 / R18194 / 383).